The sequence spans 338 residues: MSEVEGGIINRKLQGEFVNTFIRQLKFHREDFKNIGYIGGFTSIIDMGNFGITFNNDGVGTKAMIAEAVNKYDTLGIDCVAMNVNDAITVGSEPIAMVDYLAVNKMDEEMAKQLGTGFNVGAQMANISIVGGETAVLPDVVKHIDISGAVIGIVQKNQIITGSNIKEGDVIIGLGSSGLHSNGFTTVRKIIADNNLDLQDTFPGDSKKTYEVLLEPTRIYVREILDIMGIITIKGMANITGGGFKNITRMKDMKYVIDDPFEPQNVFIRLMEMGNLNYAQMFEIFNMGTGFVLVIDEDEKVDIMNALKGKVPVKVMGHVENGSGVEIPKYEVSLKGYY.

This sequence belongs to the AIR synthase family.

Its subcellular location is the cytoplasm. It catalyses the reaction 2-formamido-N(1)-(5-O-phospho-beta-D-ribosyl)acetamidine + ATP = 5-amino-1-(5-phospho-beta-D-ribosyl)imidazole + ADP + phosphate + H(+). It participates in purine metabolism; IMP biosynthesis via de novo pathway; 5-amino-1-(5-phospho-D-ribosyl)imidazole from N(2)-formyl-N(1)-(5-phospho-D-ribosyl)glycinamide: step 2/2. The protein is Phosphoribosylformylglycinamidine cyclo-ligase of Thermoplasma acidophilum (strain ATCC 25905 / DSM 1728 / JCM 9062 / NBRC 15155 / AMRC-C165).